The sequence spans 180 residues: Inorganic pyrophosphatase (180 aa).

Residues Lys28, Arg42, and Tyr54 each coordinate substrate. Asp66, Asp71, and Asp102 together coordinate Mg(2+). Tyr139 provides a ligand contact to substrate.

Belongs to the PPase family. As to quaternary structure, homohexamer. It depends on Mg(2+) as a cofactor.

The protein localises to the cytoplasm. The enzyme catalyses diphosphate + H2O = 2 phosphate + H(+). Its function is as follows. Hydrolyzes PPi generated in anabolic reactions. In terms of biological role, catalyzes the hydrolysis of inorganic pyrophosphate (PPi) forming two phosphate ions. The protein is Inorganic pyrophosphatase of Pseudanabaena sp. (strain PCC 6903).